The sequence spans 153 residues: Mitotic-spindle organizing protein 2 (153 aa).

The disordered stretch occupies residues 80 to 153 (KVSETSTGDA…SSSSSQLTSN (74 aa)). Composition is skewed to polar residues over residues 81 to 99 (VSETSTGDASSTSHTTAVP) and 107 to 133 (KMSSGQGEKSARESSSQRVPRQVSATR). The span at 134–153 (GQKSTKSSGSSSSSSQLTSN) shows a compositional bias: low complexity.

The protein belongs to the MOZART2 family. Part of the gamma-tubulin complex. Interacts with TUBG1.

The protein localises to the cytoplasm. The protein resides in the cytoskeleton. It is found in the microtubule organizing center. It localises to the centrosome. Its subcellular location is the spindle. The protein is Mitotic-spindle organizing protein 2 (mzt2) of Danio rerio (Zebrafish).